The primary structure comprises 382 residues: Flap endonuclease 1 (382 aa).

The N-domain stretch occupies residues Met-1–Arg-104. Mg(2+) is bound at residue Asp-34. DNA is bound by residues Arg-47 and Arg-70. Asp-86 serves as a coordination point for Mg(2+). The disordered stretch occupies residues Gly-95–Gly-118. Residues Glu-96–Thr-115 are compositionally biased toward basic and acidic residues. The interval Asp-122–Tyr-253 is I-domain. Mg(2+)-binding residues include Glu-158, Glu-160, Asp-179, and Asp-181. DNA is bound at residue Glu-158. Positions 231 and 233 each coordinate DNA. Asp-233 is a binding site for Mg(2+). The interval Thr-336–Phe-344 is interaction with PCNA. The segment at Thr-353–Lys-382 is disordered. Residues Asn-364–Asn-375 show a composition bias toward polar residues.

It belongs to the XPG/RAD2 endonuclease family. FEN1 subfamily. In terms of assembly, interacts with PCNA. Three molecules of FEN1 bind to one PCNA trimer with each molecule binding to one PCNA monomer. PCNA stimulates the nuclease activity without altering cleavage specificity. Mg(2+) is required as a cofactor. Phosphorylated. Phosphorylation upon DNA damage induces relocalization to the nuclear plasma.

The protein localises to the nucleus. It localises to the nucleolus. Its subcellular location is the nucleoplasm. The protein resides in the mitochondrion. In terms of biological role, structure-specific nuclease with 5'-flap endonuclease and 5'-3' exonuclease activities involved in DNA replication and repair. During DNA replication, cleaves the 5'-overhanging flap structure that is generated by displacement synthesis when DNA polymerase encounters the 5'-end of a downstream Okazaki fragment. It enters the flap from the 5'-end and then tracks to cleave the flap base, leaving a nick for ligation. Also involved in the long patch base excision repair (LP-BER) pathway, by cleaving within the apurinic/apyrimidinic (AP) site-terminated flap. Acts as a genome stabilization factor that prevents flaps from equilibrating into structures that lead to duplications and deletions. Also possesses 5'-3' exonuclease activity on nicked or gapped double-stranded DNA, and exhibits RNase H activity. Also involved in replication and repair of rDNA and in repairing mitochondrial DNA. This is Flap endonuclease 1 from Glossina morsitans morsitans (Savannah tsetse fly).